A 2191-amino-acid polypeptide reads, in one-letter code: MGAQVSTQKTGAHETGLSASGNSIIHYTNINYYKDAASNSANRQDFTQDPGKFTEPVKDIMAKTLPALNSPSAEECGYSDRVRSITLGNSTITTQESANVVVGYGVWPDYLKDDEATAEDQPTNPDVATCRFYTLDSVSWMKESQGWWWKFPDALRDMGLFGQNMQYHYLGRSGYTIHVQCNASKFHQGCLLVVCVPEAEMGAATVNEKINREHLSNGEVANTFTGTKSSNTNGVQQAVFNAGMGVRVGNLTVFPHQWINLRTNNCATIVMPYINSVPMDNMFRHYNFTLMIIPFAKLDYAAGSSTYIPITVTVAPMCAEYNGLRLAGHQGLPVMSTPGSNQFLTSDDYQSPTAMPQFDVTPEMHIPGEVKNLMEIAEVDSVVPVNNVNENVNSLEAYRIPVHSVTETGAQVFGFTLQPGADSVMERTLHGEILNYYANWSGSIKLTFMYCGSAMATGKFLLAYSPPGAGVPKNRKEAMLGTHMIWDIGLQSRCVLCVPWISQTHYRFVSKDSYTDAGFITCWYQTSIVVPAEVQNQSVILCFVSACNDFSVRLLRDSPFVTQTAFYQNDVQNAVERSIVRVADTLPSGPSNSESIPALTAAETGHTSQVVPSDTIQTRHVRNFHVRSESSVENFLSRSACVYIVEYKTQDTTPDKMYDSWVINTRQVAQLRRKLEFFTYVRFDVEVTFVITSVQDDSTRQNTDTPVLTHQIMYVPPGGPIPHAVDDYNWQTSTNPSVFWTEGNAPPRMSIPFMSVGNAYSNFYDGWSHFSQTGVYGFNTLNNMGKLYFRHVNDRTISPITSKVRIYFKPKHVKAWVPRPPRLCEYTHKDNVDYEPKGVTTSRTSITITNSKHMETHGAFGQQSGAAYVGNYRVVNRHLATHTDWQNCVWEDYNRDLLVSTTTAHGCDTIARCHCTTGVYFCASRNKHHPVVFEGPGLVEVQESGYYPKRYQSHVLLAAGLSEPGDCGGILRCEHGVIGIVTMGGEGVVGFADVRDLLWLEDDAMEQGVKDYVEQLGNAFGSGFTNQICEQVNLLKESLIGQDSILEKSLKALVKIISALVIVVRNHDDLITVTATLALIGCTSSPWRWLKQKVSQYYGISMAERQNNGWLKKFTEMTNACKGMEWIAIKIQKFIEWLKVKILPEVREKHEFLNRLKQLPLLESQIATIEQSAPSQSDQEQLFSNVQYFAHYCRKYAPLYAAEAKRVFSLEKKMSNYIQFKSKCRIEPVCLLLHGSPGVGKSVATNLIGRSLAEKLNSSIYSLPPDPDHFDGYKQQAVVIMDDLCQNPDGKDVSLFCQMVSSVDFVPPMAALEEKGILFTSPFVLASTNAGSINAPTVSDSRALARRFHFDMNIEVISMYNQNGKINMPMSVKTCDEECCPVNFKKCCPLVCGKAIQFIDRRTQVRYSLDMLVTEMFREYNHRHSVGATLEALFQGPPVYREIKISVAPEIPPPPAIADLLKSVDSEAVRDYCKEKGWLVPEVNSTLQIEKHVSRAFICLQALTTFVSVAGIIYIIYKLFAGFQGAYTGMPNQKPKVPTLRQAKVQGPAFEFAVAMMKRNSSTVKTEYGEFTMLGIYDRWAVLPRHAKPGPTILMNDQEVGVVDAKELVDKDGTNLELTLLKLNRNEKFRDIRGFLAKEEVEVNEAVLAINTSKFPNMYIPVGQVTDYGFLNLGGTPTKRMLMYNFPTRAGQCGGVLMSTGKVLGIHVGGNGHQGFSAALLKHYFNDEQGEIEFIESSKDAGYPVINTPSRTKLEPSVFHQVFEGSKEPAVLRNGDPRLKANFEEAIFSKYIGNVNTHVDEYMLEAIDHYAGQLATLDISTEPMKLEDAVYGTEGLEALDLTTSAGYPYVALGIKKRDILSKKTRDLTKLKECMDKYGLNLPMVTYVKDELRSAEKVAKGKSRLIEASSLNDSVAMRQTFGNLYKAFHQNPGIVTGSAVGCDPDLFWSKIPVMLDGHLIAFDYSGYDASLSPVWFACLKLLLEKLGYTHKETNYIDYLCNSHHLYRDKHYFVRGGMPSGCSGTSIFNSMINNIIIRTLMLKVYKGIDLDQFRMIAYGDDVIASYPWPIDASLLAEAGKDYGLIMTPADKGECFNEVTWTNVTFLKRYFRADEQYPFLVHPVMPMKDIHESIRWTKDPKNTQDHVRSLCLLAWHNGEQEYEEFIQKIRSVPVGRCLTLPAFSTLRRKWLDSF.

Glycine 2 carries N-myristoyl glycine; by host lipidation. At 2-1501 the chain is on the cytoplasmic side; sequence GAQVSTQKTG…HVSRAFICLQ (1500 aa). The interval 566-582 is amphipathic alpha-helix; sequence FYQNDVQNAVERSIVRV. Catalysis depends on for protease 2A activity residues histidine 878 and aspartate 896. Cysteine 913 and cysteine 915 together coordinate Zn(2+). Cysteine 967 acts as the For protease 2A activity in catalysis. Zn(2+) is bound by residues cysteine 973 and histidine 975. The interval 1107–1179 is membrane-binding; it reads NNGWLKKFTE…EQSAPSQSDQ (73 aa). The oligomerization stretch occupies residues 1107–1245; the sequence is NNGWLKKFTE…SPGVGKSVAT (139 aa). Residues 1128–1132 form an RNA-binding region; the sequence is AIKIQ. The SF3 helicase domain maps to 1211-1367; that stretch reads EKKMSNYIQF…SMYNQNGKIN (157 aa). Zn(2+)-binding residues include cysteine 1375, cysteine 1387, and cysteine 1392. Residues 1375 to 1392 form a C4-type; degenerate zinc finger; that stretch reads CDEECCPVNFKKCCPLVC. Positions 1419–1426 are RNA-binding; sequence EYNHRHSV. The tract at residues 1430–1435 is oligomerization; that stretch reads LEALFQ. The stretch at 1502-1517 is an intramembrane region; it reads ALTTFVSVAGIIYIIY. The Cytoplasmic portion of the chain corresponds to 1518–2191; it reads KLFAGFQGAY…TLRRKWLDSF (674 aa). Position 1527 is an O-(5'-phospho-RNA)-tyrosine (tyrosine 1527). In terms of domain architecture, Peptidase C3 spans 1547 to 1725; sequence GPAFEFAVAM…FSAALLKHYF (179 aa). Active-site for protease 3C activity residues include histidine 1586, glutamate 1617, and cysteine 1693. Residues 1956–2072 form the RdRp catalytic domain; it reads GHLIAFDYSG…SYPWPIDASL (117 aa). Aspartate 1962 and aspartate 2058 together coordinate Mg(2+).

This sequence belongs to the picornaviruses polyprotein family. Interacts with capsid protein VP1 and capsid protein VP3 to form heterotrimeric protomers. As to quaternary structure, interacts with capsid protein VP0, and capsid protein VP3 to form heterotrimeric protomers. Five protomers subsequently associate to form pentamers which serve as building blocks for the capsid. Interacts with capsid protein VP2, capsid protein VP3 and capsid protein VP4 following cleavage of capsid protein VP0. Interacts with host CD55 and FCGRT; these interactions promote virus attachment to the host cell and subsequent internalization. In terms of assembly, interacts with capsid protein VP1 and capsid protein VP3 in the mature capsid. Interacts with host CD55 and FCGRT; these interactions promote virus attachment to the host cell and subsequent internalization. Interacts with capsid protein VP0 and capsid protein VP1 to form heterotrimeric protomers. Five protomers subsequently associate to form pentamers which serve as building blocks for the capsid. Interacts with capsid protein VP4 in the mature capsid. Interacts with protein 2C; this interaction may be important for virion morphogenesis. Interacts with host FCGRT; this interaction promotes virus attachment to the host cell and subsequent internalization. As to quaternary structure, interacts with capsid protein VP1 and capsid protein VP3. In terms of assembly, homodimer. Homohexamer; forms a hexameric ring structure with 6-fold symmetry characteristic of AAA+ ATPases. Interacts (via N-terminus) with host RTN3 (via reticulon domain); this interaction is important for viral replication. Interacts with capsid protein VP3; this interaction may be important for virion morphogenesis. As to quaternary structure, interacts with protein 3CD. In terms of assembly, homodimer. Interacts with host GBF1. Interacts (via GOLD domain) with host ACBD3 (via GOLD domain); this interaction allows the formation of a viral protein 3A/ACBD3 heterotetramer with a 2:2 stoichiometry, which will stimulate the recruitment of host PI4KB in order to synthesize PI4P at the viral RNA replication sites. Interacts with RNA-directed RNA polymerase. As to quaternary structure, interacts with protein 3AB and with RNA-directed RNA polymerase. In terms of assembly, interacts with Viral protein genome-linked and with protein 3CD. The cofactor is Mg(2+). Specific enzymatic cleavages in vivo by the viral proteases yield processing intermediates and the mature proteins. Post-translationally, myristoylation is required for the formation of pentamers during virus assembly. Further assembly of 12 pentamers and a molecule of genomic RNA generates the provirion. In terms of processing, during virion maturation, immature virions are rendered infectious following cleavage of VP0 into VP4 and VP2. This maturation seems to be an autocatalytic event triggered by the presence of RNA in the capsid and it is followed by a conformational change infectious virion. Myristoylation is required during RNA encapsidation and formation of the mature virus particle. Post-translationally, VPg is uridylylated by the polymerase into VPg-pUpU. This acts as a nucleotide-peptide primer for the genomic RNA replication.

The protein localises to the virion. It is found in the host cytoplasm. Its subcellular location is the host cytoplasmic vesicle membrane. It localises to the host nucleus. The catalysed reaction is a ribonucleoside 5'-triphosphate + H2O = a ribonucleoside 5'-diphosphate + phosphate + H(+). The enzyme catalyses Selective cleavage of Tyr-|-Gly bond in the picornavirus polyprotein.. It carries out the reaction RNA(n) + a ribonucleoside 5'-triphosphate = RNA(n+1) + diphosphate. It catalyses the reaction Selective cleavage of Gln-|-Gly bond in the poliovirus polyprotein. In other picornavirus reactions Glu may be substituted for Gln, and Ser or Thr for Gly.. With respect to regulation, replication or transcription is subject to high level of random mutations by the nucleotide analog ribavirin. Functionally, forms an icosahedral capsid of pseudo T=3 symmetry with capsid proteins VP2 and VP3. The capsid is 300 Angstroms in diameter, composed of 60 copies of each capsid protein and enclosing the viral positive strand RNA genome. Capsid protein VP1 mainly forms the vertices of the capsid. Capsid protein VP1 interacts with host cell receptor to provide virion attachment to target host cells. This attachment induces virion internalization. Tyrosine kinases are probably involved in the entry process. After binding to its receptor, the capsid undergoes conformational changes. Capsid protein VP1 N-terminus (that contains an amphipathic alpha-helix) and capsid protein VP4 are externalized. Together, they shape a pore in the host membrane through which viral genome is translocated to host cell cytoplasm. Its function is as follows. Forms an icosahedral capsid of pseudo T=3 symmetry with capsid proteins VP2 and VP3. The capsid is 300 Angstroms in diameter, composed of 60 copies of each capsid protein and enclosing the viral positive strand RNA genome. Lies on the inner surface of the capsid shell. After binding to the host receptor, the capsid undergoes conformational changes. Capsid protein VP4 is released, Capsid protein VP1 N-terminus is externalized, and together, they shape a pore in the host membrane through which the viral genome is translocated into the host cell cytoplasm. In terms of biological role, component of immature procapsids, which is cleaved into capsid proteins VP4 and VP2 after maturation. Allows the capsid to remain inactive before the maturation step. Functionally, cysteine protease that cleaves viral polyprotein and specific host proteins. It is responsible for the autocatalytic cleavage between the P1 and P2 regions, which is the first cleavage occurring in the polyprotein. Also cleaves the host translation initiation factor EIF4G1, in order to shut down the capped cellular mRNA translation. Inhibits the host nucleus-cytoplasm protein and RNA trafficking by cleaving host members of the nuclear pores. Counteracts stress granule formation probably by antagonizing its assembly or promoting its dissassembly. Its function is as follows. Plays an essential role in the virus replication cycle by acting as a viroporin. Creates a pore in the host endoplasmic reticulum and as a consequence releases Ca2+ in the cytoplasm of infected cell. In turn, high levels of cytoplasmic calcium may trigger membrane trafficking and transport of viral ER-associated proteins to viroplasms, sites of viral genome replication. Induces and associates with structural rearrangements of intracellular membranes. Displays RNA-binding, nucleotide binding and NTPase activities. May play a role in virion morphogenesis and viral RNA encapsidation by interacting with the capsid protein VP3. In terms of biological role, localizes the viral replication complex to the surface of membranous vesicles. Together with protein 3CD binds the Cis-Active RNA Element (CRE) which is involved in RNA synthesis initiation. Acts as a cofactor to stimulate the activity of 3D polymerase, maybe through a nucleid acid chaperone activity. Functionally, localizes the viral replication complex to the surface of membranous vesicles. It inhibits host cell endoplasmic reticulum-to-Golgi apparatus transport and causes the disassembly of the Golgi complex, possibly through GBF1 interaction. This would result in depletion of MHC, trail receptors and IFN receptors at the host cell surface. Plays an essential role in viral RNA replication by recruiting ACBD3 and PI4KB at the viral replication sites, thereby allowing the formation of the rearranged membranous structures where viral replication takes place. Its function is as follows. Acts as a primer for viral RNA replication and remains covalently bound to viral genomic RNA. VPg is uridylylated prior to priming replication into VPg-pUpU. The oriI viral genomic sequence may act as a template for this. The VPg-pUpU is then used as primer on the genomic RNA poly(A) by the RNA-dependent RNA polymerase to replicate the viral genome. During genome replication, the VPg-RNA linkage is removed by the host TDP2, thereby accelerating replication. During the late stage of the replication cycle, host TDP2 is excluded from sites of viral RNA synthesis and encapsidation, allowing for the generation of progeny virions. Involved in the viral replication complex and viral polypeptide maturation. It exhibits protease activity with a specificity and catalytic efficiency that is different from protease 3C. Protein 3CD binds to the 5'UTR of the viral genome. In terms of biological role, replicates the viral genomic RNA on the surface of intracellular membranes. May form linear arrays of subunits that propagate along a strong head-to-tail interaction called interface-I. Covalently attaches UMP to a tyrosine of VPg, which is used to prime RNA synthesis. The positive stranded RNA genome is first replicated at virus induced membranous vesicles, creating a dsRNA genomic replication form. This dsRNA is then used as template to synthesize positive stranded RNA genomes. ss(+)RNA genomes are either translated, replicated or encapsidated. Functionally, major viral protease that mediates proteolytic processing of the polyprotein. Cleaves host EIF5B, contributing to host translation shutoff. Also cleaves host PABPC1, contributing to host translation shutoff. Cleaves host NLRP1, triggers host N-glycine-mediated degradation of the autoinhibitory NLRP1 N-terminal fragment. The sequence is that of Genome polyprotein from Echovirus 6 (strain Charles).